Here is a 209-residue protein sequence, read N- to C-terminus: Guanylyl cyclase-activating protein 3 (209 aa).

Gly-2 is lipidated: N-myristoyl glycine. At Asn-3 the chain carries Deamidated asparagine. 4 EF-hand domains span residues Pro-15–Asn-50, Lys-52–Glu-87, Lys-88–Leu-123, and Ser-130–Leu-165. Ca(2+) is bound by residues Asp-65, Asn-67, Asp-69, Glu-76, Asp-101, Asp-103, Asn-105, Ser-107, Glu-112, Asp-143, Asn-145, Asp-147, Glu-149, and Glu-154. The segment at Gln-187–Lys-209 is disordered.

As to expression, retina.

Its function is as follows. Stimulates guanylyl cyclase 1 (GC1) and GC2 when free calcium ions concentration is low and inhibits guanylyl cyclases when free calcium ions concentration is elevated. This Ca(2+)-sensitive regulation of guanylyl cyclase (GC) is a key event in recovery of the dark state of rod photoreceptors following light exposure. The polypeptide is Guanylyl cyclase-activating protein 3 (GUCA1C) (Homo sapiens (Human)).